Reading from the N-terminus, the 83-residue chain is uncharacterized protein (83 aa).

A helical membrane pass occupies residues 55-75 (FGIGAAGVLGSFVTGLLIGWV).

The protein resides in the host membrane. In terms of biological role, may play a role in phage assembly. This is an uncharacterized protein from Pseudomonas phage Pf1 (Bacteriophage Pf1).